A 217-amino-acid polypeptide reads, in one-letter code: Somatotropin (217 aa).

An N-terminal signal peptide occupies residues 1–27 (MMAAGPRTSLLLAFTLLCLPWTQVVGA). His-46 is a binding site for Zn(2+). An intrachain disulfide couples Cys-79 to Cys-190. The residue at position 132 (Ser-132) is a Phosphoserine. Position 199 (Glu-199) interacts with Zn(2+). Cysteines 207 and 215 form a disulfide.

Belongs to the somatotropin/prolactin family.

It localises to the secreted. Its function is as follows. Plays an important role in growth control. Its major role in stimulating body growth is to stimulate the liver and other tissues to secrete IGF1. It stimulates both the differentiation and proliferation of myoblasts. It also stimulates amino acid uptake and protein synthesis in muscle and other tissues. The polypeptide is Somatotropin (GH1) (Capra hircus (Goat)).